The primary structure comprises 437 residues: 3-ketoacyl-CoA thiolase (437 aa).

The active-site Acyl-thioester intermediate is Cys99. Active-site proton acceptor residues include His392 and Cys422.

Belongs to the thiolase-like superfamily. Thiolase family. Heterotetramer of two alpha chains (FadJ) and two beta chains (FadI).

Its subcellular location is the cytoplasm. The catalysed reaction is an acyl-CoA + acetyl-CoA = a 3-oxoacyl-CoA + CoA. Its pathway is lipid metabolism; fatty acid beta-oxidation. Its function is as follows. Catalyzes the final step of fatty acid oxidation in which acetyl-CoA is released and the CoA ester of a fatty acid two carbons shorter is formed. This is 3-ketoacyl-CoA thiolase from Pectobacterium atrosepticum (strain SCRI 1043 / ATCC BAA-672) (Erwinia carotovora subsp. atroseptica).